Consider the following 252-residue polypeptide: Isoprenyl transferase (252 aa).

D28 is an active-site residue. D28 contributes to the Mg(2+) binding site. Substrate is bound by residues 29 to 32 (GNGR), W33, R41, H45, and 73 to 75 (STE). N76 serves as the catalytic Proton acceptor. Substrate contacts are provided by residues W77, R79, R200, and 206 to 208 (RLS). E219 contacts Mg(2+).

It belongs to the UPP synthase family. In terms of assembly, homodimer. Requires Mg(2+) as cofactor.

Functionally, catalyzes the condensation of isopentenyl diphosphate (IPP) with allylic pyrophosphates generating different type of terpenoids. This is Isoprenyl transferase from Streptococcus pneumoniae serotype 4 (strain ATCC BAA-334 / TIGR4).